Here is a 435-residue protein sequence, read N- to C-terminus: Dual specificity mitogen-activated protein kinase kinase jkk-1 (435 aa).

Residues 35 to 49 (RDRRSTSVDQKHKEC) show a composition bias toward basic and acidic residues. Residues 35–90 (RDRRSTSVDQKHKECSSTSSSPQHQRPNNIGYLTSPMERKFTPLSMKPSPSRRDTE) form a disordered region. Polar residues predominate over residues 50–66 (SSTSSSPQHQRPNNIGY). In terms of domain architecture, Protein kinase spans 122–385 (IHIISLLGSG…YRQLMKHDFY (264 aa)). Residues 128 to 136 (LGSGSCGVV) and Lys-149 contribute to the ATP site. The Proton acceptor role is filled by Asp-246.

The protein belongs to the protein kinase superfamily. STE Ser/Thr protein kinase family. MAP kinase kinase subfamily. Interacts with unc-16. Requires Mg(2+) as cofactor. In terms of tissue distribution, expressed in most neurons, including nerve ring, head ganglions, dorsal and ventral nerve cords and tail ganglions.

Its subcellular location is the cytoplasm. The protein resides in the perikaryon. It is found in the cell projection. It localises to the axon. The enzyme catalyses L-seryl-[protein] + ATP = O-phospho-L-seryl-[protein] + ADP + H(+). It carries out the reaction L-threonyl-[protein] + ATP = O-phospho-L-threonyl-[protein] + ADP + H(+). It catalyses the reaction L-tyrosyl-[protein] + ATP = O-phospho-L-tyrosyl-[protein] + ADP + H(+). In terms of biological role, dual specificity protein kinase which acts as an essential component of the JNK signal transduction pathway. May phosphorylate jnk-1. Plays a role in coordinating locomotion via D-type GABAergic motoneurons and in regulating synaptic vesicle transport downstream of adapter protein unc-16 and probably by activating jnk-1. Positively regulates lifespan. Upon environmental stress such as heat stress regulates daf-16 nuclear translocation probably by activating jnk-1. Regulates germline cell apoptosis in response to heavy metals such as Cu(2+) and to arsenite. The sequence is that of Dual specificity mitogen-activated protein kinase kinase jkk-1 from Caenorhabditis elegans.